Reading from the N-terminus, the 481-residue chain is 4-O-methyl-glucuronoyl methylesterase (481 aa).

The N-terminal stretch at 1–21 is a signal peptide; the sequence is MVSQTVVSSLLVVLGAAGVRA. One can recognise a CBM1 domain in the interval 23 to 59; sequence QRQSLWGQCGGSGWSGPTLCVDGAWCNPQNQWYHQCI. Disulfide bonds link Cys-108-Cys-143, Cys-292-Cys-428, and Cys-324-Cys-400. The GXSYXG catalytic site motif motif lies at 291–296; sequence GCSRNG. Residue Ser-293 is the Nucleophile of the active site. Substrate-binding residues include Lys-297, Gln-339, Glu-347, and Trp-391. His-427 (proton donor/acceptor) is an active-site residue.

It belongs to the carbohydrate esterase 15 (CE15) family.

It localises to the secreted. The enzyme catalyses a 4-O-methyl-alpha-D-glucuronosyl ester derivative + H2O = 4-O-methyl-alpha-D-glucuronate derivative + an alcohol + H(+). Functionally, glucuronoyl esterase which may play a significant role in biomass degradation, as it is considered to disconnect hemicellulose from lignin through the hydrolysis of the ester bond between 4-O-methyl-D-glucuronic acid residues of glucuronoxylans and aromatic alcohols of lignin. In Podospora anserina (strain S / ATCC MYA-4624 / DSM 980 / FGSC 10383) (Pleurage anserina), this protein is 4-O-methyl-glucuronoyl methylesterase.